The sequence spans 322 residues: Acetylglutamate kinase (322 aa).

Substrate-binding positions include 89-90 (GG), Arg-111, and Asn-217.

It belongs to the acetylglutamate kinase family. ArgB subfamily.

The protein localises to the cytoplasm. The enzyme catalyses N-acetyl-L-glutamate + ATP = N-acetyl-L-glutamyl 5-phosphate + ADP. It functions in the pathway amino-acid biosynthesis; L-arginine biosynthesis; N(2)-acetyl-L-ornithine from L-glutamate: step 2/4. Catalyzes the ATP-dependent phosphorylation of N-acetyl-L-glutamate. This is Acetylglutamate kinase from Ehrlichia ruminantium (strain Welgevonden).